A 249-amino-acid chain; its full sequence is Small ribosomal subunit protein uS2 (249 aa).

This sequence belongs to the universal ribosomal protein uS2 family.

The protein is Small ribosomal subunit protein uS2 of Acinetobacter baylyi (strain ATCC 33305 / BD413 / ADP1).